A 250-amino-acid chain; its full sequence is Tumor necrosis factor ligand superfamily member 13 (250 aa).

Residues 1–104 (MPASSPFLLA…ENGERSRKRR (104 aa)) constitute a propeptide that is removed on maturation. Disordered stretches follow at residues 61–82 (EVSRLQGTGGPSQNGEGYPWQS) and 89–108 (DALEAWENGERSRKRRAVLT). In terms of domain architecture, THD spans 116 to 250 (SVLHLVPINA…HGTFLGFVKL (135 aa)). N-linked (GlcNAc...) asparagine glycosylation occurs at N124. C196 and C211 are disulfide-bonded.

Belongs to the tumor necrosis factor family. Homotrimer. The precursor is cleaved by furin. As to expression, expressed at high levels in transformed cell lines, cancers of colon, thyroid, lymphoid tissues and specifically expressed in monocytes and macrophages.

It localises to the secreted. Its function is as follows. Cytokine that binds to TNFRSF13B/TACI and to TNFRSF17/BCMA. Plays a role in the regulation of tumor cell growth. May be involved in monocyte/macrophage-mediated immunological processes. The sequence is that of Tumor necrosis factor ligand superfamily member 13 (TNFSF13) from Homo sapiens (Human).